Consider the following 274-residue polypeptide: Uridine-5'-phosphate dioxygenase (274 aa).

Fe cation is bound by residues His103, Asp105, and His246.

Requires Fe(2+) as cofactor.

The catalysed reaction is UMP + 2-oxoglutarate + O2 = uridine-5'-aldehyde + succinate + phosphate + CO2. It participates in antibiotic biosynthesis. Its activity is regulated as follows. Inhibited by several divalent cations, including Zn(2+). Dioxygenase involved in the biosynthesis of the lipopeptidyl nucleoside antibiotic A-90289. Catalyzes the dephosphorylation and oxidation of UMP to generate uridine-5'-aldehyde, the first intermediate in the biosynthesis of A-90289. The chain is Uridine-5'-phosphate dioxygenase from Streptomyces sp.